A 152-amino-acid chain; its full sequence is UPF0756 membrane protein Moth_1009 (152 aa).

Transmembrane regions (helical) follow at residues 5–25 (LIILAVLVVAVLGRANTVALA), 41–61 (IFPFIEKGGTFWGLVLLIAAI), 75–95 (LGHVFLSWVGLSAFILSLITT), and 117–137 (LILGAVIAAAFLGGVPVGPFI).

It belongs to the UPF0756 family.

The protein localises to the cell membrane. The polypeptide is UPF0756 membrane protein Moth_1009 (Moorella thermoacetica (strain ATCC 39073 / JCM 9320)).